Reading from the N-terminus, the 119-residue chain is uncharacterized protein (119 aa).

Residues 55-119 (LSTEPPTPPS…SRLPPRSWTN (65 aa)) form a disordered region. The span at 81 to 92 (LSYTRCHSTTYT) shows a compositional bias: polar residues.

This is an uncharacterized protein from Saccharomyces cerevisiae (strain ATCC 204508 / S288c) (Baker's yeast).